Here is a 395-residue protein sequence, read N- to C-terminus: NADH-quinone oxidoreductase subunit D (395 aa).

It belongs to the complex I 49 kDa subunit family. NDH-1 is composed of 14 different subunits. Subunits NuoB, C, D, E, F, and G constitute the peripheral sector of the complex.

The protein resides in the cell inner membrane. It catalyses the reaction a quinone + NADH + 5 H(+)(in) = a quinol + NAD(+) + 4 H(+)(out). Its function is as follows. NDH-1 shuttles electrons from NADH, via FMN and iron-sulfur (Fe-S) centers, to quinones in the respiratory chain. The immediate electron acceptor for the enzyme in this species is believed to be ubiquinone. Couples the redox reaction to proton translocation (for every two electrons transferred, four hydrogen ions are translocated across the cytoplasmic membrane), and thus conserves the redox energy in a proton gradient. This is NADH-quinone oxidoreductase subunit D from Anaplasma phagocytophilum (strain HZ).